We begin with the raw amino-acid sequence, 291 residues long: Light-independent protochlorophyllide reductase iron-sulfur ATP-binding protein (291 aa).

Residues 10-15 and Lys39 contribute to the ATP site; that span reads GIGKST. Residue Ser14 participates in Mg(2+) binding. [4Fe-4S] cluster contacts are provided by Cys95 and Cys129. 180–181 is a binding site for ATP; it reads NR.

This sequence belongs to the NifH/BchL/ChlL family. Homodimer. Protochlorophyllide reductase is composed of three subunits; ChlL, ChlN and ChlB. [4Fe-4S] cluster is required as a cofactor.

The protein localises to the plastid. It localises to the chloroplast. It carries out the reaction chlorophyllide a + oxidized 2[4Fe-4S]-[ferredoxin] + 2 ADP + 2 phosphate = protochlorophyllide a + reduced 2[4Fe-4S]-[ferredoxin] + 2 ATP + 2 H2O. The protein operates within porphyrin-containing compound metabolism; chlorophyll biosynthesis (light-independent). In terms of biological role, component of the dark-operative protochlorophyllide reductase (DPOR) that uses Mg-ATP and reduced ferredoxin to reduce ring D of protochlorophyllide (Pchlide) to form chlorophyllide a (Chlide). This reaction is light-independent. The L component serves as a unique electron donor to the NB-component of the complex, and binds Mg-ATP. The chain is Light-independent protochlorophyllide reductase iron-sulfur ATP-binding protein from Pinus thunbergii (Japanese black pine).